The primary structure comprises 137 residues: NADH dehydrogenase [ubiquinone] 1 beta subcomplex subunit 7 (137 aa).

Glycine 2 carries N-myristoyl glycine lipidation. Residues 56-98 (RDYCAHYLIRLLKCKRDSFPNFLACKQERHDWDYCEHRDYVMR) enclose the CHCH domain. The short motif at 59–69 (CAHYLIRLLKC) is the Cx9C motif 1 element. Cystine bridges form between cysteine 59–cysteine 90 and cysteine 69–cysteine 80. Serine 73 bears the Phosphoserine mark. The short motif at 80 to 90 (CKQERHDWDYC) is the Cx9C motif 2 element. Positions 113 to 137 (KRREKKAAELAKGQGPGEVDPKVAL) are disordered.

Belongs to the complex I NDUFB7 subunit family. In terms of assembly, complex I is composed of 45 different subunits.

The protein localises to the mitochondrion inner membrane. Its subcellular location is the mitochondrion intermembrane space. Functionally, accessory subunit of the mitochondrial membrane respiratory chain NADH dehydrogenase (Complex I), that is believed not to be involved in catalysis. Complex I functions in the transfer of electrons from NADH to the respiratory chain. The immediate electron acceptor for the enzyme is believed to be ubiquinone. The sequence is that of NADH dehydrogenase [ubiquinone] 1 beta subcomplex subunit 7 (NDUFB7) from Gorilla gorilla gorilla (Western lowland gorilla).